The following is a 267-amino-acid chain: Type III pantothenate kinase (267 aa).

6-13 (DSGNSRLK) lines the ATP pocket. Residues tyrosine 96 and 103 to 106 (GADR) contribute to the substrate site. Aspartate 105 acts as the Proton acceptor in catalysis. An ATP-binding site is contributed by threonine 131. Residue threonine 181 coordinates substrate.

It belongs to the type III pantothenate kinase family. In terms of assembly, homodimer. The cofactor is NH4(+). Requires K(+) as cofactor.

Its subcellular location is the cytoplasm. The catalysed reaction is (R)-pantothenate + ATP = (R)-4'-phosphopantothenate + ADP + H(+). It participates in cofactor biosynthesis; coenzyme A biosynthesis; CoA from (R)-pantothenate: step 1/5. In terms of biological role, catalyzes the phosphorylation of pantothenate (Pan), the first step in CoA biosynthesis. The polypeptide is Type III pantothenate kinase (Bordetella bronchiseptica (strain ATCC BAA-588 / NCTC 13252 / RB50) (Alcaligenes bronchisepticus)).